The sequence spans 331 residues: Ketol-acid reductoisomerase (NADP(+)) (331 aa).

In terms of domain architecture, KARI N-terminal Rossmann spans 2–182; sequence ARMYYDADAQ…GGTRAGILET (181 aa). Residues 25-28, serine 51, serine 53, and 83-86 each bind NADP(+); these read YGSQ and DEVQ. Histidine 108 is a catalytic residue. An NADP(+)-binding site is contributed by glycine 134. In terms of domain architecture, KARI C-terminal knotted spans 183 to 328; it reads TFREETETDL…QELRSMFSWL (146 aa). The Mg(2+) site is built by aspartate 191, glutamate 195, glutamate 227, and glutamate 231. A substrate-binding site is contributed by serine 252.

It belongs to the ketol-acid reductoisomerase family. It depends on Mg(2+) as a cofactor.

It carries out the reaction (2R)-2,3-dihydroxy-3-methylbutanoate + NADP(+) = (2S)-2-acetolactate + NADPH + H(+). The enzyme catalyses (2R,3R)-2,3-dihydroxy-3-methylpentanoate + NADP(+) = (S)-2-ethyl-2-hydroxy-3-oxobutanoate + NADPH + H(+). It participates in amino-acid biosynthesis; L-isoleucine biosynthesis; L-isoleucine from 2-oxobutanoate: step 2/4. It functions in the pathway amino-acid biosynthesis; L-valine biosynthesis; L-valine from pyruvate: step 2/4. In terms of biological role, involved in the biosynthesis of branched-chain amino acids (BCAA). Catalyzes an alkyl-migration followed by a ketol-acid reduction of (S)-2-acetolactate (S2AL) to yield (R)-2,3-dihydroxy-isovalerate. In the isomerase reaction, S2AL is rearranged via a Mg-dependent methyl migration to produce 3-hydroxy-3-methyl-2-ketobutyrate (HMKB). In the reductase reaction, this 2-ketoacid undergoes a metal-dependent reduction by NADPH to yield (R)-2,3-dihydroxy-isovalerate. In Thermosynechococcus vestitus (strain NIES-2133 / IAM M-273 / BP-1), this protein is Ketol-acid reductoisomerase (NADP(+)).